A 217-amino-acid chain; its full sequence is Ras-related protein Rab-19 (217 aa).

Residues S26, V28, G29, K30, T31, C32, Y42, T43, E44, T45, and T49 each coordinate GTP. T31 contacts Mg(2+). A Switch 1 motif is present at residues 39 to 54 (SGVYTETQQNTIGVDF). Residues T49 and D72 each contribute to the Mg(2+) site. The Switch 2 signature appears at 74-89 (AGQERFRTITQSYYRS). GTP is bound by residues G75, N130, K131, D133, S161, A162, and K163. S-geranylgeranyl cysteine attachment occurs at residues C215 and C217. The residue at position 217 (C217) is a Cysteine methyl ester.

It belongs to the small GTPase superfamily. Rab family. Requires Mg(2+) as cofactor.

Its subcellular location is the cell membrane. The catalysed reaction is GTP + H2O = GDP + phosphate + H(+). With respect to regulation, regulated by guanine nucleotide exchange factors (GEFs) which promote the exchange of bound GDP for free GTP. Regulated by GTPase activating proteins (GAPs) which increase the GTP hydrolysis activity. Inhibited by GDP dissociation inhibitors (GDIs). Its function is as follows. The small GTPases Rab are key regulators of intracellular membrane trafficking, from the formation of transport vesicles to their fusion with membranes. Rabs cycle between an inactive GDP-bound form and an active GTP-bound form that is able to recruit to membranes different set of downstream effectors directly responsible for vesicle formation, movement, tethering and fusion. The protein is Ras-related protein Rab-19 of Homo sapiens (Human).